The following is a 203-amino-acid chain: Large ribosomal subunit protein bL25 (203 aa).

It belongs to the bacterial ribosomal protein bL25 family. CTC subfamily. Part of the 50S ribosomal subunit; part of the 5S rRNA/L5/L18/L25 subcomplex. Contacts the 5S rRNA. Binds to the 5S rRNA independently of L5 and L18.

This is one of the proteins that binds to the 5S RNA in the ribosome where it forms part of the central protuberance. The sequence is that of Large ribosomal subunit protein bL25 from Dechloromonas aromatica (strain RCB).